The chain runs to 313 residues: tRNA dimethylallyltransferase (313 aa).

11–18 is an ATP binding site; the sequence is GPTACGKT. 13–18 serves as a coordination point for substrate; it reads TACGKT. 3 interaction with substrate tRNA regions span residues 36-39, 160-164, and 243-248; these read DSAL, QRIGR, and RCVGYR.

This sequence belongs to the IPP transferase family. In terms of assembly, monomer. It depends on Mg(2+) as a cofactor.

The enzyme catalyses adenosine(37) in tRNA + dimethylallyl diphosphate = N(6)-dimethylallyladenosine(37) in tRNA + diphosphate. Its function is as follows. Catalyzes the transfer of a dimethylallyl group onto the adenine at position 37 in tRNAs that read codons beginning with uridine, leading to the formation of N6-(dimethylallyl)adenosine (i(6)A). This chain is tRNA dimethylallyltransferase, found in Neisseria gonorrhoeae (strain ATCC 700825 / FA 1090).